A 144-amino-acid chain; its full sequence is Small ribosomal subunit protein eS19 (144 aa).

The protein belongs to the eukaryotic ribosomal protein eS19 family.

The chain is Small ribosomal subunit protein eS19 (RPS19) from Argopecten irradians (Bay scallop).